A 137-amino-acid chain; its full sequence is Large ribosomal subunit protein uL16 (137 aa).

Positions 1 to 17 are enriched in basic residues; sequence MLQPKRTKFRKTHKGRN. Positions 1-23 are disordered; it reads MLQPKRTKFRKTHKGRNRGLAQN.

This sequence belongs to the universal ribosomal protein uL16 family. As to quaternary structure, part of the 50S ribosomal subunit.

Binds 23S rRNA and is also seen to make contacts with the A and possibly P site tRNAs. The chain is Large ribosomal subunit protein uL16 from Pseudoalteromonas translucida (strain TAC 125).